We begin with the raw amino-acid sequence, 77 residues long: Conotoxin Ar5.1 a (77 aa).

Positions 1–19 (MLCLPVFIILLLLASPAAS) are cleaved as a signal peptide. The propeptide occupies 20–44 (NPLETRIQSDLIRAALEDADMKNEK).

The protein belongs to the conotoxin T superfamily. Post-translationally, contains 2 disulfide bonds that can be either 'C1-C3, C2-C4' or 'C1-C4, C2-C3', since these disulfide connectivities have been observed for conotoxins with cysteine framework V (for examples, see AC P0DQQ7 and AC P81755). Expressed by the venom duct.

Its subcellular location is the secreted. This is Conotoxin Ar5.1 a from Conus arenatus (Sand-dusted cone).